A 218-amino-acid chain; its full sequence is Large ribosomal subunit protein bL25 (218 aa).

A disordered region spans residues 178-218 (VTPPTVTEDPDATEEDNTTAESVEATGERNDDNLDRPGRVE). A compositionally biased stretch (acidic residues) spans 185-195 (EDPDATEEDNT). A compositionally biased stretch (basic and acidic residues) spans 203–218 (TGERNDDNLDRPGRVE).

The protein belongs to the bacterial ribosomal protein bL25 family. CTC subfamily. As to quaternary structure, part of the 50S ribosomal subunit; part of the 5S rRNA/L5/L18/L25 subcomplex. Contacts the 5S rRNA. Binds to the 5S rRNA independently of L5 and L18.

Functionally, this is one of the proteins that binds to the 5S RNA in the ribosome where it forms part of the central protuberance. This chain is Large ribosomal subunit protein bL25, found in Shouchella clausii (strain KSM-K16) (Alkalihalobacillus clausii).